Here is a 472-residue protein sequence, read N- to C-terminus: MAGGVTGGADGTWSDRFEQGLHPFIEVFNASIGFDLTLLQEDLDGSIAHARMLGSCGVISVEEAEQLVQGLETIRSEAHAGTFQPGLADEDVHFAVERRLIALLGPVGKKLHTGRSRNDQVGTDLRLWLRRRLDELEGDLQRLQRALVAQADLHRRTMIPGYTHLQRAQPLCLAHHLLAYVEMLERDRLRLHDVRSRVNICPLGAAALAGTPVPIDRQQTAKALGFDAIYANSLDAVSDRDFCVEFSAAASLVMAHLSRLAEEVIAWASEEFRFVRLSDRCATGSSLMPQKKNPDVPELVRGKCGRVFGHLQGLLTMIKGLPLAYNKDFQEDKEALFDAFRTTRDCIEAMAILFEEGLEFRTERLNTAVEQDFSNATDVADYLVAKGVPFREAYQLVGAVVRRCLDEGCLLRDLSLAAWQELHPAFEADLHDALAPQAVVAARRSEGGTGFDRVDEQLGRWLQHLNGTQPVG.

The protein belongs to the lyase 1 family. Argininosuccinate lyase subfamily.

The protein localises to the cytoplasm. It catalyses the reaction 2-(N(omega)-L-arginino)succinate = fumarate + L-arginine. It functions in the pathway amino-acid biosynthesis; L-arginine biosynthesis; L-arginine from L-ornithine and carbamoyl phosphate: step 3/3. This Synechococcus sp. (strain CC9902) protein is Argininosuccinate lyase.